The following is a 534-amino-acid chain: Ankyrin repeat and LEM domain-containing protein 1 (534 aa).

ANK repeat units lie at residues 4 to 35, 39 to 71, 75 to 104, and 108 to 137; these read TACLALRLLAALREEEARAVEELLRLGADPNL, DGAAAVHLAARASHPRALHCLRMLLRWGADPNA, EGLTPVHVAAAWGCCGALELLLSRGGDPTL, and DGLRPLDWALQQRHHNCARVLQELDTPTQP. Positions 279–323 constitute an LEM domain; that stretch reads HSSVPPMSDLQLLQALRALGYSPGPVTPFTRGHYLRRLQEAQASR. One can recognise a GIY-YIG domain in the interval 370 to 485; that stretch reads KSSFTYLLLD…ALGLQTLTNQ (116 aa). The Nuclear localization signal signature appears at 498-505; sequence PPSRRRRL.

Interacts (via LEM domain) with BANF1; the interaction may favor BANF1 dimerization. In terms of tissue distribution, predominantly expressed in bone marrow, spleen, thymus, colon and ovary. Expressed also to a lesser extent in lymph nodes, liver and testis.

Its subcellular location is the cytoplasm. The protein resides in the nucleus. Functionally, endonuclease that probably plays a role in the DNA damage response and DNA repair. The sequence is that of Ankyrin repeat and LEM domain-containing protein 1 from Mus musculus (Mouse).